Reading from the N-terminus, the 239-residue chain is Endonuclease V (239 aa).

Mg(2+)-binding residues include Asp50 and Asp118.

This sequence belongs to the endonuclease V family. Requires Mg(2+) as cofactor.

The protein resides in the cytoplasm. The enzyme catalyses Endonucleolytic cleavage at apurinic or apyrimidinic sites to products with a 5'-phosphate.. Its function is as follows. DNA repair enzyme involved in the repair of deaminated bases. Selectively cleaves double-stranded DNA at the second phosphodiester bond 3' to a deoxyinosine leaving behind the intact lesion on the nicked DNA. This is Endonuclease V from Xylella fastidiosa (strain 9a5c).